Consider the following 282-residue polypeptide: Putative 4-diphosphocytidyl-2-C-methyl-D-erythritol kinase (282 aa).

K9 is an active-site residue. Residue P93–A103 coordinates ATP. Residue D135 is part of the active site.

This sequence belongs to the GHMP kinase family. IspE subfamily.

The enzyme catalyses 4-CDP-2-C-methyl-D-erythritol + ATP = 4-CDP-2-C-methyl-D-erythritol 2-phosphate + ADP + H(+). Catalyzes the phosphorylation of the position 2 hydroxy group of 4-diphosphocytidyl-2C-methyl-D-erythritol. The protein is Putative 4-diphosphocytidyl-2-C-methyl-D-erythritol kinase of Staphylococcus haemolyticus (strain JCSC1435).